The primary structure comprises 957 residues: MTQTLSQLENSGAFIERHIGPDAAQQQEMLNAVGAQSLNALTGQIVPKDIQLATPPQVGAPATEYAALAELKAIASRNKRFTSYIGMGYTAVQLPPVILRNMLENPGWYTAYTPYQPEVSQGRLEALLNFQQVTLDLTGLDMASASLLDEATAAAEAMAMAKRVSKLKNANRFFVASDVHPQTLDVVRTRAETFGFEVIVDDAQKVLDHQDVFGVLLQQVGTTGEIHDYTALISELKSRKIVVSVAADIMALVLLTAPGKQGADIVFGSAQRFGVPMGYGGPHAAFFAAKDEYKRSMPGRIIGVSKDAAGNTALRMAMQTREQHIRREKANSNICTSQVLLANIASLYAVYHGPVGLKRIANRIHRLTDILAAGLQQKGLKLRHAHYFDTLCVEVADKAGVLARAEAAEINLRSDILNAVGITLDETTTRENVMQLFSVLLGDNHGLEIDTLDKDVAHDSRSIQPAMLRDDEILTHPVFNRYHSETEMMRYMHSLERKDLALNQAMIPLGSCTMKLNAAAEMIPITWQEFAELHPFCPPEQAEGYQQMIAQLADWLVKLTGYDAVCMQPNSGAQGEYAGLLAIRHYHESRNEGHRDICLIPASAHGTNPASAHMAGMQVVVVACDKNGNIDLTDLRAKAEQAGDNLSCIMVTYPSTHGVYEETIREVCEVVHQFGGQVYLDGANMNAQVGITSPGFIGADVSHLNLHKTFCIPHGGGGPGMGPIGVKAHLAPFVPGHSVVQIEGMLTRQGAVSAAPFGSASILPISWMYIRMMGAEGLKKASQVAILNANYIASRLQDAFPVLYTGRDGRVAHECILDIRPLKEETGISELDIAKRLIDYGFHAPTMSFPVAGTLMVEPTESESKVELDRFIDAMLAIRAEIDQVKAGVWPLEDNPLVNAPHIQNELVAEWAHPYSREVAVFPAGVADKYWPTVKRLDDVYGDRNLFCSCVPISEYQ.

The residue at position 708 (Lys-708) is an N6-(pyridoxal phosphate)lysine.

This sequence belongs to the GcvP family. As to quaternary structure, the glycine cleavage system is composed of four proteins: P, T, L and H. It depends on pyridoxal 5'-phosphate as a cofactor.

It catalyses the reaction N(6)-[(R)-lipoyl]-L-lysyl-[glycine-cleavage complex H protein] + glycine + H(+) = N(6)-[(R)-S(8)-aminomethyldihydrolipoyl]-L-lysyl-[glycine-cleavage complex H protein] + CO2. The glycine cleavage system catalyzes the degradation of glycine. The P protein binds the alpha-amino group of glycine through its pyridoxal phosphate cofactor; CO(2) is released and the remaining methylamine moiety is then transferred to the lipoamide cofactor of the H protein. In Escherichia coli O8 (strain IAI1), this protein is Glycine dehydrogenase (decarboxylating).